A 965-amino-acid chain; its full sequence is Phosphatidylethanolamine N-methyltransferase (965 aa).

Over Met-1–Asp-82 the chain is Lumenal. The tract at residues Pro-34 to Pro-54 is disordered. A helical membrane pass occupies residues Leu-83–Ala-103. Residues Lys-104 to Pro-106 lie on the Cytoplasmic side of the membrane. A helical membrane pass occupies residues Val-107–Leu-127. The Lumenal portion of the chain corresponds to His-128–Arg-192. The helical transmembrane segment at Leu-193–Ser-213 threads the bilayer. Topologically, residues Arg-214–Ser-220 are cytoplasmic. Residues Val-221–Val-241 traverse the membrane as a helical segment. The Lumenal portion of the chain corresponds to Lys-242–Glu-274. The chain crosses the membrane as a helical span at residues Met-275–Ala-295. The Cytoplasmic segment spans residues Ala-296–Ser-297. Residues Tyr-298 to Val-318 traverse the membrane as a helical segment. The Lumenal segment spans residues Glu-319–Ser-394. The disordered stretch occupies residues Thr-326–Thr-368. Positions Ser-344–Thr-368 are enriched in polar residues. A helical transmembrane segment spans residues Ser-395–Tyr-415. Residue Gln-416 is a topological domain, cytoplasmic. The helical transmembrane segment at Phe-417–Leu-437 threads the bilayer. Residues Leu-438–His-470 are Lumenal-facing. Residues Leu-471–Pro-491 form a helical membrane-spanning segment. Topologically, residues Ser-492 to His-503 are cytoplasmic. The helical transmembrane segment at Val-504–Leu-524 threads the bilayer. Residues Gly-525–Gly-559 are Lumenal-facing. The helical transmembrane segment at Leu-560–Phe-580 threads the bilayer. The Cytoplasmic portion of the chain corresponds to Leu-581 to Glu-965.

This sequence belongs to the class VI-like SAM-binding methyltransferase superfamily. CHO2 family.

It is found in the endoplasmic reticulum membrane. The catalysed reaction is a 1,2-diacyl-sn-glycero-3-phosphoethanolamine + S-adenosyl-L-methionine = a 1,2-diacyl-sn-glycero-3-phospho-N-methylethanolamine + S-adenosyl-L-homocysteine + H(+). It functions in the pathway phospholipid metabolism; phosphatidylcholine biosynthesis. Functionally, catalyzes the first step of the methylation pathway of phosphatidylcholine biosynthesis, the SAM-dependent methylation of phosphatidylethanolamine (PE) to phosphatidylmonomethylethanolamine (PMME). The protein is Phosphatidylethanolamine N-methyltransferase of Emericella nidulans (strain FGSC A4 / ATCC 38163 / CBS 112.46 / NRRL 194 / M139) (Aspergillus nidulans).